The sequence spans 164 residues: Large ribosomal subunit protein uL10 (164 aa).

The protein belongs to the universal ribosomal protein uL10 family. As to quaternary structure, part of the ribosomal stalk of the 50S ribosomal subunit. The N-terminus interacts with L11 and the large rRNA to form the base of the stalk. The C-terminus forms an elongated spine to which L12 dimers bind in a sequential fashion forming a multimeric L10(L12)X complex.

Functionally, forms part of the ribosomal stalk, playing a central role in the interaction of the ribosome with GTP-bound translation factors. This Aliivibrio fischeri (strain MJ11) (Vibrio fischeri) protein is Large ribosomal subunit protein uL10.